Here is a 276-residue protein sequence, read N- to C-terminus: Elongation factor Ts, mitochondrial (276 aa).

It belongs to the EF-Ts family.

It is found in the mitochondrion. Functionally, associates with the EF-Tu.GDP complex and induces the exchange of GDP to GTP. It remains bound to the aminoacyl-tRNA.EF-Tu.GTP complex up to the GTP hydrolysis stage on the ribosome. The chain is Elongation factor Ts, mitochondrial from Leishmania major.